We begin with the raw amino-acid sequence, 431 residues long: Na(+)/H(+) antiporter NhaA (431 aa).

11 helical membrane-spanning segments follow: residues 33–53, 74–94, 112–132, 144–164, 173–193, 197–217, 225–245, 279–299, 311–331, 347–367, and 379–399; these read VGGALLLVAALAALVWANSPW, LSISAWAADGLLAIFFFVVGV, ALPIAAAVGGMIVPAVIFVGV, GWAIPVATDIAFALAVLAVIA, IFLLTLAVVDDLLAIIVIAVF, QLSFGPLAGALVTIAVFGLAV, FLLLPLAVVAWALMHASGVHA, FAVPVFAFFAAGVTVGGLSGF, VIAGLVLGKPIGVFLTTYVLA, VLGLALLAGIGFTVSLLIGEL, and AKIAVLTGSVLAGLLAAVVLL.

The protein belongs to the NhaA Na(+)/H(+) (TC 2.A.33) antiporter family.

It localises to the cell membrane. The enzyme catalyses Na(+)(in) + 2 H(+)(out) = Na(+)(out) + 2 H(+)(in). In terms of biological role, na(+)/H(+) antiporter that extrudes sodium in exchange for external protons. This is Na(+)/H(+) antiporter NhaA from Mycolicibacterium smegmatis (strain ATCC 700084 / mc(2)155) (Mycobacterium smegmatis).